The primary structure comprises 276 residues: 2,3,4,5-tetrahydropyridine-2,6-dicarboxylate N-succinyltransferase (276 aa).

Substrate-binding residues include Arg104 and Asp141.

Belongs to the transferase hexapeptide repeat family. As to quaternary structure, homotrimer.

It localises to the cytoplasm. It catalyses the reaction (S)-2,3,4,5-tetrahydrodipicolinate + succinyl-CoA + H2O = (S)-2-succinylamino-6-oxoheptanedioate + CoA. Its pathway is amino-acid biosynthesis; L-lysine biosynthesis via DAP pathway; LL-2,6-diaminopimelate from (S)-tetrahydrodipicolinate (succinylase route): step 1/3. The chain is 2,3,4,5-tetrahydropyridine-2,6-dicarboxylate N-succinyltransferase from Legionella pneumophila (strain Corby).